The primary structure comprises 347 residues: NADH-quinone oxidoreductase subunit H (347 aa).

A run of 9 helical transmembrane segments spans residues 13–33, 50–70, 82–102, 115–135, 161–181, 198–218, 248–268, 286–306, and 325–345; these read LIIA…VAYL, PNVV…KFVF, GVFL…WAVI, VGIL…IMGG, IGFV…TDIV, FLDW…ISAL, FLLF…LMTV, VPGI…FAMV, and VFLP…KVFG.

Belongs to the complex I subunit 1 family. As to quaternary structure, NDH-1 is composed of 14 different subunits. Subunits NuoA, H, J, K, L, M, N constitute the membrane sector of the complex.

It localises to the cell inner membrane. It carries out the reaction a quinone + NADH + 5 H(+)(in) = a quinol + NAD(+) + 4 H(+)(out). NDH-1 shuttles electrons from NADH, via FMN and iron-sulfur (Fe-S) centers, to quinones in the respiratory chain. The immediate electron acceptor for the enzyme in this species is believed to be ubiquinone. Couples the redox reaction to proton translocation (for every two electrons transferred, four hydrogen ions are translocated across the cytoplasmic membrane), and thus conserves the redox energy in a proton gradient. This subunit may bind ubiquinone. In Brucella ovis (strain ATCC 25840 / 63/290 / NCTC 10512), this protein is NADH-quinone oxidoreductase subunit H.